The primary structure comprises 252 residues: Geranylgeranylglyceryl phosphate synthase (252 aa).

Aspartate 27 and threonine 57 together coordinate Mg(2+). Sn-glycerol 1-phosphate contacts are provided by residues 175-181, 206-207, and 228-229; these read YLEAGSG, GG, and GN.

It belongs to the GGGP/HepGP synthase family. Group II subfamily. The cofactor is Mg(2+).

The protein localises to the cytoplasm. The catalysed reaction is sn-glycerol 1-phosphate + (2E,6E,10E)-geranylgeranyl diphosphate = sn-3-O-(geranylgeranyl)glycerol 1-phosphate + diphosphate. The protein operates within membrane lipid metabolism; glycerophospholipid metabolism. In terms of biological role, prenyltransferase that catalyzes the transfer of the geranylgeranyl moiety of geranylgeranyl diphosphate (GGPP) to the C3 hydroxyl of sn-glycerol-1-phosphate (G1P). This reaction is the first ether-bond-formation step in the biosynthesis of archaeal membrane lipids. This Metallosphaera sedula (strain ATCC 51363 / DSM 5348 / JCM 9185 / NBRC 15509 / TH2) protein is Geranylgeranylglyceryl phosphate synthase.